Consider the following 121-residue polypeptide: uncharacterized protein (121 aa).

The first 19 residues, 1 to 19 (MKKFALATIFALATTSAFA), serve as a signal peptide directing secretion.

To E.coli YgiW.

It is found in the periplasm. This is an uncharacterized protein from Haemophilus influenzae (strain ATCC 51907 / DSM 11121 / KW20 / Rd).